The primary structure comprises 473 residues: Purple acid phosphatase 1 (473 aa).

A signal peptide spans 1–38; that stretch reads MRLVVVGLWCLILGLILNPTKFCDAGVTSSYVRKSLSA. N118 carries N-linked (GlcNAc...) asparagine glycosylation. Residue D172 participates in Fe cation binding. N180 carries N-linked (GlcNAc...) asparagine glycosylation. D201 and Y204 together coordinate Fe cation. D201 serves as a coordination point for Mn(2+). Residue N238 coordinates Mn(2+). N238 lines the substrate pocket. A glycan (N-linked (GlcNAc...) asparagine) is linked at N311. A Mn(2+)-binding site is contributed by H323. H333 (proton donor) is an active-site residue. Residue H360 coordinates Mn(2+). 360 to 362 contributes to the substrate binding site; that stretch reads HVH. Residue H362 participates in Fe cation binding. The N-linked (GlcNAc...) asparagine glycan is linked to N433.

Belongs to the metallophosphoesterase superfamily. Purple acid phosphatase family. In terms of assembly, homodimer; disulfide-linked. Fe cation is required as a cofactor. Mn(2+) serves as cofactor. It depends on Zn(2+) as a cofactor. Requires Cu(2+) as cofactor. The cofactor is Mg(2+).

It localises to the secreted. The enzyme catalyses a phosphate monoester + H2O = an alcohol + phosphate. The sequence is that of Purple acid phosphatase 1 (PAP1) from Ipomoea batatas (Sweet potato).